We begin with the raw amino-acid sequence, 240 residues long: Gas vesicle protein C (240 aa).

The span at 1-13 (MALKDKWQQDRIG) shows a compositional bias: basic and acidic residues. A disordered region spans residues 1-20 (MALKDKWQQDRIGRQQGVQE). 5 repeats span residues 18–50 (VQER…RQGF), 51–83 (VTGV…LENF), 84–116 (IQQL…LSEF), 117–149 (REDL…LAIF), and 150–207 (RQTL…LQDY). Positions 18 to 207 (VQERQQQVQT…GVFRAELQDY (190 aa)) are 5 X 33 AA tandem repeats.

It belongs to the gas vesicle GvpC family.

It is found in the gas vesicle. In terms of biological role, confers stability, involved in shaping gas vesicles, hollow, gas filled proteinaceous nanostructures. During planktonic growth they allow positioning of the organism at a favorable depth for light or nutrient acquisition. The polypeptide is Gas vesicle protein C (Planktothrix agardhii (Oscillatoria agardhii)).